The following is a 1088-amino-acid chain: RNA-directed RNA polymerase (1088 aa).

The region spanning 501–687 (LSYGDVTRFL…AKRYIAGGKI (187 aa)) is the RdRp catalytic domain.

This sequence belongs to the reoviridae RNA-directed RNA polymerase family. Interacts with VP3 (Potential). Interacts with VP2; this interaction activates VP1. Interacts with NSP5; this interaction is probably necessary for the formation of functional virus factories. Interacts with NSP2; this interaction is weak. It depends on Mg(2+) as a cofactor.

The protein localises to the virion. It catalyses the reaction RNA(n) + a ribonucleoside 5'-triphosphate = RNA(n+1) + diphosphate. In terms of biological role, RNA-directed RNA polymerase that is involved in both transcription and genome replication. Together with VP3 capping enzyme, forms an enzyme complex positioned near the channels situated at each of the five-fold vertices of the core. Following infection, the outermost layer of the virus is lost, leaving a double-layered particle (DLP) made up of the core and VP6 shell. VP1 then catalyzes the transcription of fully conservative plus-strand genomic RNAs that are extruded through the DLP's channels into the cytoplasm where they function as mRNAs for translation of viral proteins. One copy of each of the viral (+)RNAs is also recruited during core assembly, together with newly synthesized polymerase complexes and VP2. The polymerase of these novo-formed particles catalyzes the synthesis of complementary minus-strands leading to dsRNA formation. To do so, the polymerase specifically recognizes and binds 4 bases 5'-UGUG-3' in the conserved 3'-sequence of plus-strand RNA templates. VP2 presumably activates the autoinhibited VP1-RNA complex to coordinate packaging and genome replication. Once dsRNA synthesis is complete, the polymerase switches to the transcriptional mode, thus providing secondary transcription. The chain is RNA-directed RNA polymerase from Bos taurus (Bovine).